The following is an 80-amino-acid chain: Sulfur carrier protein TusA (80 aa).

The active-site Cysteine persulfide intermediate is the Cys-17.

It belongs to the sulfur carrier protein TusA family.

Its subcellular location is the cytoplasm. Its function is as follows. Sulfur carrier protein which probably makes part of a sulfur-relay system. In Pseudomonas putida (strain ATCC 47054 / DSM 6125 / CFBP 8728 / NCIMB 11950 / KT2440), this protein is Sulfur carrier protein TusA.